A 321-amino-acid polypeptide reads, in one-letter code: Probable 1-aminocyclopropane-1-carboxylate oxidase (321 aa).

A Fe2OG dioxygenase domain is found at 159 to 259 (PTFGTKVSNY…RMSIASFYNP (101 aa)). The Fe cation site is built by His183, Asp185, and His240.

This sequence belongs to the iron/ascorbate-dependent oxidoreductase family. Requires Fe cation as cofactor.

The catalysed reaction is 1-aminocyclopropane-1-carboxylate + L-ascorbate + O2 = ethene + L-dehydroascorbate + hydrogen cyanide + CO2 + 2 H2O. Its pathway is alkene biosynthesis; ethylene biosynthesis via S-adenosyl-L-methionine; ethylene from S-adenosyl-L-methionine: step 2/2. The sequence is that of Probable 1-aminocyclopropane-1-carboxylate oxidase (ACO) from Dianthus caryophyllus (Carnation).